The primary structure comprises 166 residues: Phosphopantetheine adenylyltransferase (166 aa).

Residue S11 participates in substrate binding. Residues 11 to 12 and H19 each bind ATP; that span reads SF. Substrate is bound by residues K43, A76, and R90. Residues 91-93, E101, and 126-132 contribute to the ATP site; these read GLR and LQPISSS.

Belongs to the bacterial CoaD family. In terms of assembly, homohexamer. Mg(2+) serves as cofactor.

It is found in the cytoplasm. It carries out the reaction (R)-4'-phosphopantetheine + ATP + H(+) = 3'-dephospho-CoA + diphosphate. Its pathway is cofactor biosynthesis; coenzyme A biosynthesis; CoA from (R)-pantothenate: step 4/5. Its function is as follows. Reversibly transfers an adenylyl group from ATP to 4'-phosphopantetheine, yielding dephospho-CoA (dPCoA) and pyrophosphate. This is Phosphopantetheine adenylyltransferase from Streptococcus equi subsp. zooepidemicus (strain H70).